A 517-amino-acid chain; its full sequence is GMP synthase [glutamine-hydrolyzing] (517 aa).

The Glutamine amidotransferase type-1 domain occupies 11 to 202 (KIIVLDYGSQ…AFGVCGAQDN (192 aa)). Cys88 acts as the Nucleophile in catalysis. Residues His176 and Glu178 contribute to the active site. The GMPS ATP-PPase domain occupies 203–392 (WTMNDFIDMQ…LGMPYELVWR (190 aa)). 230 to 236 (SGGVDSS) is an ATP binding site.

Homodimer.

It carries out the reaction XMP + L-glutamine + ATP + H2O = GMP + L-glutamate + AMP + diphosphate + 2 H(+). It functions in the pathway purine metabolism; GMP biosynthesis; GMP from XMP (L-Gln route): step 1/1. Functionally, catalyzes the synthesis of GMP from XMP. The protein is GMP synthase [glutamine-hydrolyzing] of Latilactobacillus sakei subsp. sakei (strain 23K) (Lactobacillus sakei subsp. sakei).